Consider the following 635-residue polypeptide: MDGSCDCIEPLWQADDLLVKYQYISDFFIALAYFSIPLELIYFVKKSAFFPYRWVLIQFGAFIVLCGATHLINLWTFAIYTKTIAVVLTVAKAATAVVSCITALMLVHIIPDLLNVKLRERFLKDKADELDREMGIIRTQEETGRHVHMLTHEIRSTLDRHTILRTTLVELGRTLVLAECALWMPTRSGSALQLSHTIYNSAAIGSVVPINLPIVSKVFNSNRVVKIPHTSPLASITADKSRYVPPEVVAIRVPLLHLTNFQINDWPELSAKSFAVMVLMLPPDSAREWRPHERELVEVVADQVAVALSHAAILEESMRARDLLMEQNIALDAARREAEMAICARNDFLAVMNHEMRTPMRAIVSLSSLLLETNLSAEQRLMVETILKSSDLLATLTNDVLDVSKLENGSLELEIAPFNLHSTFTDVVNLIKPVAACKRLSVMVTLAPELPLHAIGDQKRLMQIILNVAGNSIKFTKEGHVSITASMARPDALRGPHEPDYHPVVSDGFFYLAVQVKDTGCGISPQDMPHTFRKFAHPENAGKWNSGSGLGLALSRRFVSLMEGNIWLESEGVGKGCTAMFFVKLGMPEKPNANLRRMAPHPLQPNQGAGGPDALSISIMDSNPRVPRVRYQSSV.

A run of 3 helical transmembrane segments spans residues 24-44 (ISDFFIALAYFSIPLELIYFV), 59-79 (FGAFIVLCGATHLINLWTFAI), and 94-114 (ATAVVSCITALMLVHIIPDLL). Cu cation-binding residues include cysteine 66 and histidine 70. A GAF domain is found at 159 to 308 (DRHTILRTTL…VVADQVAVAL (150 aa)). Positions 351–589 (VMNHEMRTPM…MFFVKLGMPE (239 aa)) constitute a Histidine kinase domain. Phosphohistidine; by autocatalysis is present on histidine 354.

It belongs to the ethylene receptor family. As to quaternary structure, homodimer. Cu cation is required as a cofactor.

The protein localises to the endoplasmic reticulum membrane. It carries out the reaction ATP + protein L-histidine = ADP + protein N-phospho-L-histidine.. Ethylene receptor related to bacterial two-component regulators. Acts as a negative regulator of ethylene signaling. May play a role in the regulation of flowering by up-regulating GI (GIGANTEA) and RCN1 and regulate starch accumulation by down-regulating the alpha-amylase AMY3D. This Oryza sativa subsp. japonica (Rice) protein is Probable ethylene response sensor 2 (ERS2).